The following is a 206-amino-acid chain: Small ribosomal subunit protein uS4 (206 aa).

The disordered stretch occupies residues 18 to 46 (NIWGRPKSPVNRREYGPGQHGQRRKGKLS). The S4 RNA-binding domain maps to 94–156 (RRLDAVVYRA…SKQNVAVLEA (63 aa)).

It belongs to the universal ribosomal protein uS4 family. Part of the 30S ribosomal subunit. Contacts protein S5. The interaction surface between S4 and S5 is involved in control of translational fidelity.

One of the primary rRNA binding proteins, it binds directly to 16S rRNA where it nucleates assembly of the body of the 30S subunit. Functionally, with S5 and S12 plays an important role in translational accuracy. The polypeptide is Small ribosomal subunit protein uS4 (Ruegeria sp. (strain TM1040) (Silicibacter sp.)).